A 91-amino-acid polypeptide reads, in one-letter code: Small ribosomal subunit protein uS19 (91 aa).

Belongs to the universal ribosomal protein uS19 family.

In terms of biological role, protein S19 forms a complex with S13 that binds strongly to the 16S ribosomal RNA. The sequence is that of Small ribosomal subunit protein uS19 from Pseudomonas paraeruginosa (strain DSM 24068 / PA7) (Pseudomonas aeruginosa (strain PA7)).